Here is a 338-residue protein sequence, read N- to C-terminus: GTPase Obg (338 aa).

Residues 1–159 (MKFVDSASVF…FTLDLELKLM (159 aa)) enclose the Obg domain. The tract at residues 123–145 (GGRGNQHFATSTHQAPRHAEPGQ) is disordered. An OBG-type G domain is found at 160 to 323 (ADVGLVGFPN…LKDALWRIIV (164 aa)). GTP-binding positions include 166–173 (GFPNAGKS), 191–195 (FTTLV), 213–216 (DIPG), 280–283 (TKMD), and 304–306 (SAV). Mg(2+) is bound by residues Ser173 and Thr193.

This sequence belongs to the TRAFAC class OBG-HflX-like GTPase superfamily. OBG GTPase family. As to quaternary structure, monomer. Requires Mg(2+) as cofactor.

It is found in the cytoplasm. Functionally, an essential GTPase which binds GTP, GDP and possibly (p)ppGpp with moderate affinity, with high nucleotide exchange rates and a fairly low GTP hydrolysis rate. Plays a role in control of the cell cycle, stress response, ribosome biogenesis and in those bacteria that undergo differentiation, in morphogenesis control. The polypeptide is GTPase Obg (Chlorobium chlorochromatii (strain CaD3)).